Consider the following 513-residue polypeptide: Solute carrier family 2, facilitated glucose transporter member 10 (513 aa).

At 1 to 6 the chain is on the cytoplasmic side; the sequence is MGCSVL. Residues 7 to 27 traverse the membrane as a helical segment; it reads LLTITVSTLGGLVFGYELGII. Residues 28–46 lie on the Extracellular side of the membrane; sequence SGALPQLQTHFSLGCVQQE. A helical transmembrane segment spans residues 47-67; sequence AVVSALLIGSLFASIIGGWLI. At 68–80 the chain is on the cytoplasmic side; it reads DRHGRRTSILLSN. A helical membrane pass occupies residues 81–101; that stretch reads LLILAGSVILTTGTSFFALVI. Over 102–104 the chain is Extracellular; that stretch reads GRA. Residues 105-125 form a helical membrane-spanning segment; the sequence is VIGFAMTVSSMSCCIFVSEMV. The Cytoplasmic segment spans residues 126-130; the sequence is TPERR. Residues 131–151 traverse the membrane as a helical segment; it reads GLMVTLYEVGITVGILIAYAV. At 152–164 the chain is on the extracellular side; sequence NYIFNNVPLTGWR. The chain crosses the membrane as a helical span at residues 165 to 185; it reads YMFGFAIIPSLIQLASIVLLP. Residues 186–236 lie on the Cytoplasmic side of the membrane; the sequence is KQAEVFVIHDDDSRQADRLTEETETSNQHQQSEKYGVSDLFKSKDNMRRRT. A helical transmembrane segment spans residues 237 to 257; sequence VIGVGLVLSQQFTGQPNVLFY. A D-glucose-binding site is contributed by 246-247; it reads QQ. Topologically, residues 258–272 are extracellular; that stretch reads ASTILFSVGFQSNAS. Asn270 is a glycosylation site (N-linked (GlcNAc...) asparagine). A helical transmembrane segment spans residues 273 to 293; sequence AILASVGFGIVKVIATLLAML. Topologically, residues 294-301 are cytoplasmic; the sequence is CSDRAGRR. A helical transmembrane segment spans residues 302-322; it reads SLLIGGCSMLAVGLILTGFLC. The Extracellular portion of the chain corresponds to 323–376; that stretch reads RQSVIDTTKRCTSVGPHSNLTLSAEHDEGVGFSSQTLDVHEHLRSFSQSEDIYK. N-linked (GlcNAc...) asparagine glycosylation is present at Asn341. The helical transmembrane segment at 377–397 threads the bilayer; it reads WIIFTCLMAVVSAFSVSFGPM. Residues 398–422 lie on the Cytoplasmic side of the membrane; that stretch reads TWVVLSEIFPKDIRGRAFSFINCFN. Trp399 is a D-glucose binding site. 2 helical membrane passes run 423–443 and 444–464; these read VGAN…IGLS and GVFL…YLVL. Residues 465–513 are Cytoplasmic-facing; that stretch reads PETKGKSLQDIDRELSQTRMIHRQELCSIFQRRRFSPGYQRVQLTSTAT.

The protein belongs to the major facilitator superfamily. Sugar transporter (TC 2.A.1.1) family. Glucose transporter subfamily.

It localises to the endomembrane system. The protein resides in the cytoplasm. Its subcellular location is the perinuclear region. It catalyses the reaction D-glucose(out) = D-glucose(in). Facilitative glucose transporter required for the development of the cardiovascular system. This is Solute carrier family 2, facilitated glucose transporter member 10 from Danio rerio (Zebrafish).